We begin with the raw amino-acid sequence, 548 residues long: CTP synthase (548 aa).

An amidoligase domain region spans residues 1 to 270 (MNRRSCAFIF…DTKISALLGC (270 aa)). Serine 17 contributes to the CTP binding site. Serine 17 contributes to the UTP binding site. ATP-binding positions include 18–23 (SIGKGL) and aspartate 75. Mg(2+)-binding residues include aspartate 75 and glutamate 143. CTP contacts are provided by residues 150-152 (DIE), 190-195 (KTKPSQ), and lysine 227. UTP-binding positions include 190–195 (KTKPSQ) and lysine 227. The Glutamine amidotransferase type-1 domain maps to 305-548 (YSGLCDAYIS…VRAGLLRKYS (244 aa)). Glycine 356 provides a ligand contact to L-glutamine. Cysteine 383 (nucleophile; for glutamine hydrolysis) is an active-site residue. Residues 384–387 (FGFQ), glutamate 407, and arginine 475 each bind L-glutamine. Catalysis depends on residues histidine 521 and glutamate 523.

This sequence belongs to the CTP synthase family. Homotetramer.

It catalyses the reaction UTP + L-glutamine + ATP + H2O = CTP + L-glutamate + ADP + phosphate + 2 H(+). It carries out the reaction L-glutamine + H2O = L-glutamate + NH4(+). The enzyme catalyses UTP + NH4(+) + ATP = CTP + ADP + phosphate + 2 H(+). Its pathway is pyrimidine metabolism; CTP biosynthesis via de novo pathway; CTP from UDP: step 2/2. Allosterically activated by GTP, when glutamine is the substrate; GTP has no effect on the reaction when ammonia is the substrate. The allosteric effector GTP functions by stabilizing the protein conformation that binds the tetrahedral intermediate(s) formed during glutamine hydrolysis. Inhibited by the product CTP, via allosteric rather than competitive inhibition. Functionally, catalyzes the ATP-dependent amination of UTP to CTP with either L-glutamine or ammonia as the source of nitrogen. Regulates intracellular CTP levels through interactions with the four ribonucleotide triphosphates. In Neorickettsia sennetsu (strain ATCC VR-367 / Miyayama) (Ehrlichia sennetsu), this protein is CTP synthase.